The sequence spans 105 residues: N(4)-acetylcytidine amidohydrolase (105 aa).

Positions Thr-7 to Glu-93 constitute an ASCH domain. Lys-21 functions as the Proton acceptor in the catalytic mechanism. Residue Thr-24 is the Nucleophile of the active site. Glu-74 (proton donor) is an active-site residue.

It belongs to the N(4)-acetylcytidine amidohydrolase family.

The enzyme catalyses N(4)-acetylcytidine + H2O = cytidine + acetate + H(+). It catalyses the reaction N(4)-acetyl-2'-deoxycytidine + H2O = 2'-deoxycytidine + acetate + H(+). The catalysed reaction is N(4)-acetylcytosine + H2O = cytosine + acetate + H(+). Its function is as follows. Catalyzes the hydrolysis of N(4)-acetylcytidine (ac4C). The sequence is that of N(4)-acetylcytidine amidohydrolase from Shewanella baltica (strain OS195).